Consider the following 86-residue polypeptide: Allergen Hum j 3 (86 aa).

The chain is Allergen Hum j 3 from Humulus japonicus (Japanese hop).